The sequence spans 291 residues: Tobamovirus multiplication protein 1 (291 aa).

Over 1–3 (MTD) the chain is Cytoplasmic. A helical membrane pass occupies residues 4-24 (SGLMMPAEIAGILTTAITSWW). Residues 25–36 (DDVNESTQWQDG) lie on the Extracellular side of the membrane. A glycan (N-linked (GlcNAc...) asparagine) is linked at asparagine 28. A helical membrane pass occupies residues 37-57 (IFFALCGAYALVSAVALVQLI). Topologically, residues 58-78 (RIQMRVPEYGWTTQKVFHLMN) are cytoplasmic. The helical transmembrane segment at 79–99 (FVVNGVRAVLFGFHMQVFLVH) threads the bilayer. Topologically, residues 100-104 (PKALC) are extracellular. The helical transmembrane segment at 105 to 125 (WVLLDLPGLLFFSAYTLLVLF) threads the bilayer. Over 126-144 (WAEIYHQARSLPTDKLRIT) the chain is Cytoplasmic. Residues 145-165 (YISVNVAVYLAQIGIWAYIWV) form a helical membrane-spanning segment. Residues 166–172 (HDNSTVE) are Extracellular-facing. N-linked (GlcNAc...) asparagine glycosylation is present at asparagine 168. The chain crosses the membrane as a helical span at residues 173–193 (LVGKIFIAVVSFIAALGFLLY). Over 194-220 (GGRLFFMLRRFPIESKGRRKKLHEVGS) the chain is Cytoplasmic. The helical transmembrane segment at 221-241 (VTAICFTCFLIRCVVVAVSAF) threads the bilayer. Topologically, residues 242 to 253 (DKDLTLDVLDHP) are extracellular. Residues 254-274 (VLNLIYYMVVEVLPSALVLFI) form a helical membrane-spanning segment. Residues 275 to 291 (LRKLPPKRVSAQYHPIQ) lie on the Cytoplasmic side of the membrane.

The protein belongs to the plant tobamovirus multiplication TOM1 protein family. Constituent of tobamovirus replication complex. Interacts with TOM2A and with the helicase domain of tobamovirus-encoded replication proteins.

It localises to the vacuole membrane. In terms of biological role, necessary for the efficient intracellular multiplication of tobamoviruses, probably being a membrane anchor promoting the formation of the replication complex. This chain is Tobamovirus multiplication protein 1 (TOM1), found in Arabidopsis thaliana (Mouse-ear cress).